The following is a 168-amino-acid chain: CASP-like protein UU-1 (168 aa).

Residues 1-17 (MVELESQEAVTVASTAD) are Cytoplasmic-facing. Residues 18-38 (IAVDVSLRLLAAATSLAAAVV) form a helical membrane-spanning segment. Topologically, residues 39-54 (VAANHQQRWGIRVDFT) are extracellular. The chain crosses the membrane as a helical span at residues 55–75 (LFQVWIGFVAVNLVCTVYAAA). The Cytoplasmic portion of the chain corresponds to 76–95 (TAAAAARKAMGRWWLHHADA). Residues 96-116 (VVVNLEAAATAGAGAIGSIAM) traverse the membrane as a helical segment. Residues 117–136 (WGNEASGWYAVCRLYRRYCN) lie on the Extracellular side of the membrane. The helical transmembrane segment at 137-157 (AGAAALALSLAAVLLLGVACA) threads the bilayer. The Cytoplasmic segment spans residues 158–168 (RSRYPKMPPTT).

It belongs to the Casparian strip membrane proteins (CASP) family. As to quaternary structure, homodimer and heterodimers.

It is found in the cell membrane. This Oryza sativa subsp. japonica (Rice) protein is CASP-like protein UU-1.